The sequence spans 210 residues: MIRATRVLGQHRWKEAAADSVLLDFDDRHRRRLAMTGTRGLEFLLDLEHATALRGGDALVLEDGRLIEVVAAAEPLLEIRAGDPHHLVRLAWHLGNRHLPTQIMAKSLRIRRDHVIEAMVKGLGARVIEIEAPFDPEGGAYAEPSHAHGDHDHDHHGHDHHGHDHTSHDHAHHSHAHHDHDHGHAHDDHVHDEHCGHDHHHGHSHAHDHK.

The tract at residues 136–210 (PEGGAYAEPS…HGHSHAHDHK (75 aa)) is disordered. 2 stretches are compositionally biased toward basic and acidic residues: residues 145-169 (SHAH…TSHD) and 178-196 (HDHD…EHCG). The segment covering 197 to 210 (HDHHHGHSHAHDHK) has biased composition (basic residues).

This sequence belongs to the UreE family.

Its subcellular location is the cytoplasm. In terms of biological role, involved in urease metallocenter assembly. Binds nickel. Probably functions as a nickel donor during metallocenter assembly. This is Urease accessory protein UreE from Bradyrhizobium sp. (strain ORS 278).